We begin with the raw amino-acid sequence, 550 residues long: MSDTPRKLSLNKLSLKRDSAPEAPKLEERLHKVLAQAGLGSRRALEQRIADGLIKVNGAVAQTGMSVRSGDKIELDGRSFVASALTEPSRVLIYNKPEGEVTTREDPEGRPTVFESLPVLKGSRWIAIGRLDINTTGLLLLTTDGELANAMMHPSYEVEREYVVRVRAPEGEEKVSDAIIERLSRGVLLEDGGAKFDEIERIGGTDSHDWFRVVVKEGRNREVRRLWESQGCQVSRLKRSRYGKISLPRELLRGHSVEVAQDKVDALRAELKLEEGAPSALTLQPVIGQRRAAKSTVHVSRDGRSNAYVNGQTSGADEGRELRRFDNLREDRGRGGRGKPGGFKGGLTVSGEAAARQSQQRPFKQRGPAKGDRGALPDGNPAAFRSWYVPDGVSTGPSGHRNAGPSGPGTGQARPYAKKGPGGARPGTGGPVGARSGGPGRGAGGGQGQSQGQGQRKHPYGHPGNAPSFPSDHANPGFNPYGAARPAGRPSGGRPGPGGNRGPASANRGPGGPGGGARGPGGPGGAPRGPGGRPPGGGNRRPPGGGNRGR.

In terms of domain architecture, S4 RNA-binding spans 28–97 (ERLHKVLAQA…PSRVLIYNKP (70 aa)). The active-site Nucleophile is the Asp-132. Positions 294-550 (KSTVHVSRDG…RPPGGGNRGR (257 aa)) are disordered. The span at 317-334 (DEGRELRRFDNLREDRGR) shows a compositional bias: basic and acidic residues. 3 stretches are compositionally biased toward gly residues: residues 420–451 (GPGGARPGTGGPVGARSGGPGRGAGGGQGQSQ), 490–501 (PSGGRPGPGGNR), and 509–550 (GPGG…NRGR).

Belongs to the pseudouridine synthase RsuA family.

The catalysed reaction is uridine(2605) in 23S rRNA = pseudouridine(2605) in 23S rRNA. Its function is as follows. Responsible for synthesis of pseudouridine from uracil-2605 in 23S ribosomal RNA. This Xanthomonas axonopodis pv. citri (strain 306) protein is Ribosomal large subunit pseudouridine synthase B (rluB).